A 1059-amino-acid chain; its full sequence is DNA (cytosine-5)-methyltransferase CMT1 (1059 aa).

2 disordered regions span residues 1-196 and 230-272; these read MVPE…GALA and CVGE…DEAR. The span at 29 to 41 shows a compositional bias: acidic residues; it reads AEAEAVADLDEID. 3 stretches are compositionally biased toward basic and acidic residues: residues 42 to 79, 92 to 129, and 147 to 157; these read REMSRAESRKRQRRTAKEKPGARKGATEWKPEDVEKAA, REMPRPELRKRQRRTAKEKPSAHEGATEWKPEDVEKAA, and SRGKRQRGVEK. Positions 158–167 are enriched in basic residues; that stretch reads VKRRTRKKTA. Over residues 252–262 the composition is skewed to basic and acidic residues; that stretch reads RRVEDSDDHFV. The region spanning 312 to 436 is the BAH domain; the sequence is EIYHLDDDVY…VAYSTFANLP (125 aa). One can recognise an SAM-dependent MTase C5-type domain in the interval 479-1017; it reads ASLLDLYSGC…YALGLAYRGE (539 aa). A Chromo domain is found at 584 to 649; that stretch reads FDVEELLEIC…KGHKENILPL (66 aa). The active site involves Cys-662.

This sequence belongs to the class I-like SAM-binding methyltransferase superfamily. C5-methyltransferase family.

The protein localises to the nucleus. The enzyme catalyses a 2'-deoxycytidine in DNA + S-adenosyl-L-methionine = a 5-methyl-2'-deoxycytidine in DNA + S-adenosyl-L-homocysteine + H(+). In terms of biological role, involved in CpXpG DNA methylation. May not play a major role in maintaining CpXpG methylation. In Oryza sativa subsp. japonica (Rice), this protein is DNA (cytosine-5)-methyltransferase CMT1.